The sequence spans 302 residues: Sulfotransferase 1C4 (302 aa).

55–60 contacts 3'-phosphoadenylyl sulfate; that stretch reads KAGTTW. A substrate-binding site is contributed by 113–115; that stretch reads KTH. The active-site Proton acceptor is the H115. 3'-phosphoadenylyl sulfate contacts are provided by residues R137, S145, Y200, 234 to 239, and 262 to 266; these read TSFDVM and FMRKG.

The protein belongs to the sulfotransferase 1 family. In terms of tissue distribution, expressed at high levels in fetal lung and kidney and at low levels in fetal heart, adult kidney, ovary and spinal cord.

The protein localises to the cytoplasm. It is found in the cytosol. It carries out the reaction a phenol + 3'-phosphoadenylyl sulfate = an aryl sulfate + adenosine 3',5'-bisphosphate + H(+). The catalysed reaction is 17beta-estradiol + 3'-phosphoadenylyl sulfate = 17beta-estradiol 3-sulfate + adenosine 3',5'-bisphosphate + H(+). It catalyses the reaction bisphenol A + 3'-phosphoadenylyl sulfate = bisphenyl A sulfate + adenosine 3',5'-bisphosphate + H(+). Sulfotransferase that utilizes 3'-phospho-5'-adenylyl sulfate (PAPS) as sulfonate donor to catalyze the sulfate conjugation of phenolic compounds. Can also sulfonate estrogenic compounds, however, the dietary flavonoids (phytoestrogen) and environmental estrogens, like bisphenol A are better substrates than 17beta-estradiol (E2). Mediates the sulfation of doxorubicin and its analog epirubicin, two antitumor anthracyclines. This chain is Sulfotransferase 1C4, found in Homo sapiens (Human).